Here is a 278-residue protein sequence, read N- to C-terminus: Tropomyosin A (278 aa).

A coiled-coil region spans residues 1–270 (IMMAMKLEKE…YRAISGELDT (270 aa)). The interval 92–134 (DFEQSSGRLTETSTKLDDASKAAEESERNRKTLETRSISDDER) is disordered. Over residues 95–104 (QSSGRLTETS) the composition is skewed to polar residues. The segment covering 105–134 (TKLDDASKAAEESERNRKTLETRSISDDER) has biased composition (basic and acidic residues).

Belongs to the tropomyosin family. Homodimer.

In terms of biological role, tropomyosin, in association with the troponin complex, plays a central role in the calcium dependent regulation of muscle contraction. This Echinococcus granulosus (Hydatid tapeworm) protein is Tropomyosin A.